The sequence spans 479 residues: RHO1 GEF localizing protein 1 (479 aa).

A disordered region spans residues 460 to 479; sequence SQKDPSRTDPSKLRRVPVIQ.

In terms of biological role, regulator of RHO1 signaling that acts as a cofactor required for the efficient localization of the TUS1 GTP exchange factor (GEF) for RHO1 to the bud neck during all phases of cytokinesis. RHO1 is a key, essential hub protein in the cell wall integrity (CWI) pathway in which activated RHO1-GTP binds directly to and activates multiple different downstream effectors required for cell wall synthesis and actin assembly during cytokinesis. The polypeptide is RHO1 GEF localizing protein 1 (Saccharomyces cerevisiae (strain ATCC 204508 / S288c) (Baker's yeast)).